The chain runs to 178 residues: Protein GrpE (178 aa).

Belongs to the GrpE family. In terms of assembly, homodimer.

It is found in the cytoplasm. Its function is as follows. Participates actively in the response to hyperosmotic and heat shock by preventing the aggregation of stress-denatured proteins, in association with DnaK and GrpE. It is the nucleotide exchange factor for DnaK and may function as a thermosensor. Unfolded proteins bind initially to DnaJ; upon interaction with the DnaJ-bound protein, DnaK hydrolyzes its bound ATP, resulting in the formation of a stable complex. GrpE releases ADP from DnaK; ATP binding to DnaK triggers the release of the substrate protein, thus completing the reaction cycle. Several rounds of ATP-dependent interactions between DnaJ, DnaK and GrpE are required for fully efficient folding. The polypeptide is Protein GrpE (Rickettsia akari (strain Hartford)).